The following is a 113-amino-acid chain: T cell receptor alpha variable 8-6 (113 aa).

Positions 1–20 (MLLLLVPAFQVIFTLGGTRA) are cleaved as a signal peptide. An Ig-like domain is found at 21 to 113 (QSVTQLDSQV…DTAEYFCAVS (93 aa)). Cys42 and Cys110 are joined by a disulfide. 2 N-linked (GlcNAc...) asparagine glycosylation sites follow: Asn43 and Asn87.

In terms of assembly, alpha-beta TR is a heterodimer composed of an alpha and beta chain; disulfide-linked. The alpha-beta TR is associated with the transmembrane signaling CD3 coreceptor proteins to form the TR-CD3 (TcR or TCR). The assembly of alpha-beta TR heterodimers with CD3 occurs in the endoplasmic reticulum where a single alpha-beta TR heterodimer associates with one CD3D-CD3E heterodimer, one CD3G-CD3E heterodimer and one CD247 homodimer forming a stable octameric structure. CD3D-CD3E and CD3G-CD3E heterodimers preferentially associate with TR alpha and TR beta chains, respectively. The association of the CD247 homodimer is the last step of TcR assembly in the endoplasmic reticulum and is required for transport to the cell surface.

The protein localises to the cell membrane. Its function is as follows. V region of the variable domain of T cell receptor (TR) alpha chain that participates in the antigen recognition. Alpha-beta T cell receptors are antigen specific receptors which are essential to the immune response and are present on the cell surface of T lymphocytes. Recognize peptide-major histocompatibility (MH) (pMH) complexes that are displayed by antigen presenting cells (APC), a prerequisite for efficient T cell adaptive immunity against pathogens. Binding of alpha-beta TR to pMH complex initiates TR-CD3 clustering on the cell surface and intracellular activation of LCK that phosphorylates the ITAM motifs of CD3G, CD3D, CD3E and CD247 enabling the recruitment of ZAP70. In turn ZAP70 phosphorylates LAT, which recruits numerous signaling molecules to form the LAT signalosome. The LAT signalosome propagates signal branching to three major signaling pathways, the calcium, the mitogen-activated protein kinase (MAPK) kinase and the nuclear factor NF-kappa-B (NF-kB) pathways, leading to the mobilization of transcription factors that are critical for gene expression and essential for T cell growth and differentiation. The T cell repertoire is generated in the thymus, by V-(D)-J rearrangement. This repertoire is then shaped by intrathymic selection events to generate a peripheral T cell pool of self-MH restricted, non-autoaggressive T cells. Post-thymic interaction of alpha-beta TR with the pMH complexes shapes TR structural and functional avidity. The chain is T cell receptor alpha variable 8-6 from Homo sapiens (Human).